Consider the following 184-residue polypeptide: Photosystem I assembly protein Ycf4 (184 aa).

The next 2 membrane-spanning stretches (helical) occupy residues 22-42 and 57-77; these read FCWA…GTSS and IIFF…LFIS.

This sequence belongs to the Ycf4 family.

The protein resides in the plastid. Its subcellular location is the chloroplast thylakoid membrane. Functionally, seems to be required for the assembly of the photosystem I complex. The protein is Photosystem I assembly protein Ycf4 of Arabis hirsuta (Hairy rock-cress).